The chain runs to 305 residues: Phosphoribosylaminoimidazole-succinocarboxamide synthase (305 aa).

It belongs to the SAICAR synthetase family.

It catalyses the reaction 5-amino-1-(5-phospho-D-ribosyl)imidazole-4-carboxylate + L-aspartate + ATP = (2S)-2-[5-amino-1-(5-phospho-beta-D-ribosyl)imidazole-4-carboxamido]succinate + ADP + phosphate + 2 H(+). The protein operates within purine metabolism; IMP biosynthesis via de novo pathway; 5-amino-1-(5-phospho-D-ribosyl)imidazole-4-carboxamide from 5-amino-1-(5-phospho-D-ribosyl)imidazole-4-carboxylate: step 1/2. This is Phosphoribosylaminoimidazole-succinocarboxamide synthase from Tropheryma whipplei (strain TW08/27) (Whipple's bacillus).